Reading from the N-terminus, the 297-residue chain is Cell division protein FtsX (297 aa).

The Cytoplasmic segment spans residues 1–24; that stretch reads MKAKTLSRHLREGVKNLSRNGWMT. Residues 25-45 traverse the membrane as a helical segment; it reads FASVSAVTVTLLLVGVFLTAI. The Extracellular segment spans residues 46-171; sequence MNMNHFATKV…LFDTVKTGRN (126 aa). Residues 172–192 traverse the membrane as a helical segment; the sequence is IGIVLIAGLLFTAMFLISNTI. The Cytoplasmic portion of the chain corresponds to 193–219; the sequence is KITIYARSTEIEIMKLVGATNWFIRWP. A helical membrane pass occupies residues 220 to 240; it reads FLLEGLFLGVLGSIIPIGLIL. The Extracellular segment spans residues 241–270; the sequence is VTYNSLQGMFNEKLGGTIFELLPYSPFVFQ. Residues 271 to 291 traverse the membrane as a helical segment; it reads LAGLLVLIGALIGMWGSVMSI. The Cytoplasmic portion of the chain corresponds to 292-297; sequence RRFLKV.

This sequence belongs to the ABC-4 integral membrane protein family. FtsX subfamily. As to quaternary structure, interacts with FtsE.

It localises to the cell membrane. Its function is as follows. Part of the ABC transporter FtsEX involved in asymmetric cellular division facilitating the initiation of sporulation. The chain is Cell division protein FtsX from Bacillus anthracis.